We begin with the raw amino-acid sequence, 224 residues long: Cytidylate kinase (224 aa).

Gly-10 to Thr-18 is a binding site for ATP.

It belongs to the cytidylate kinase family. Type 1 subfamily.

The protein localises to the cytoplasm. The catalysed reaction is CMP + ATP = CDP + ADP. It catalyses the reaction dCMP + ATP = dCDP + ADP. The protein is Cytidylate kinase of Leuconostoc mesenteroides subsp. mesenteroides (strain ATCC 8293 / DSM 20343 / BCRC 11652 / CCM 1803 / JCM 6124 / NCDO 523 / NBRC 100496 / NCIMB 8023 / NCTC 12954 / NRRL B-1118 / 37Y).